A 1032-amino-acid polypeptide reads, in one-letter code: Reticulon-3 (1032 aa).

A compositionally biased stretch (low complexity) spans 1 to 24 (MAEPSAATQSHSISSSSFGAEPSA). The segment at 1-61 (MAEPSAATQS…SSSSSQPVSL (61 aa)) is disordered. The residue at position 2 (Ala-2) is an N-acetylalanine. Residues 2–863 (AEPSAATQSH…KKTGFVFGTT (862 aa)) are Cytoplasmic-facing. Phosphoserine is present on Ser-30. A compositionally biased stretch (low complexity) spans 32–61 (GACPALGTKSCSSSCADSFVSSSSSQPVSL). 6 positions are modified to phosphoserine: Ser-229, Ser-243, Ser-246, Ser-283, Ser-316, and Ser-453. Over residues 545 to 568 (CEREEKTSKNFEELVSDSELHQDQ) the composition is skewed to basic and acidic residues. The tract at residues 545–617 (CEREEKTSKN…NPKLPSTVSP (73 aa)) is disordered. The segment covering 605–617 (TTENPKLPSTVSP) has biased composition (polar residues). Phosphoserine is present on residues Ser-649 and Ser-650. Over residues 696 to 715 (NESGGSEIKDIGSKYSEQSK) the composition is skewed to basic and acidic residues. The disordered stretch occupies residues 696–726 (NESGGSEIKDIGSKYSEQSKETNGSEPLGVF). Position 735 is a phosphoserine (Ser-735). Residues 844–1032 (VHDLIFWRDV…LPGIAKKKAE (189 aa)) enclose the Reticulon domain. Residues 864-887 (LIMLLSLAAFSVISVVSYLILALL) constitute an intramembrane region (helical). Topologically, residues 888–947 (SVTISFRIYKSVIQAVQKSEEGHPFKAYLDVDITLSSEAFHNYMNAAMVHINRALKLIIR) are cytoplasmic. The segment at residues 948-968 (LFLVEDLVDSLKLAVFMWLMT) is an intramembrane region (helical). Over 969–972 (YVGA) the chain is Cytoplasmic. An intramembrane region (helical) is located at residues 973 to 993 (VFNGITLLILAELLIFSVPIV). The interaction with FADD stretch occupies residues 987–1032 (IFSVPIVYEKYKTQIDHYVGIARDQTKSIVEKIQAKLPGIAKKKAE). Residues 994–1032 (YEKYKTQIDHYVGIARDQTKSIVEKIQAKLPGIAKKKAE) lie on the Cytoplasmic side of the membrane. An interaction with BACE1 region spans residues 1000-1002 (QID).

As to quaternary structure, homodimer. Interacts with ATL1. Interacts with RTN4. Isoform 3 interacts with BACE1, BACE2, BCL2 and FADD. Interacts with ATL2. Interacts with TMEM33. Interacts with ZFYVE27 and with KIF5A in a ZFYVE27-dependent manner. Interacts with RIGI. Interacts with TRIM25. (Microbial infection) Interacts with Coxsackievirus A16, enterovirus 71 and poliovirus P2C proteins. In terms of assembly, (Microbial infection) Interacts with West Nile virus protein NS4A. As to expression, isoform 3 is widely expressed, with highest levels in brain, where it is enriched in neuronal cell bodies from gray matter (at protein level). Three times more abundant in macula than in peripheral retina. Isoform 1 is expressed at high levels in brain and at low levels in skeletal muscle. Isoform 2 is only found in melanoma.

The protein localises to the endoplasmic reticulum membrane. The protein resides in the golgi apparatus membrane. In terms of biological role, may be involved in membrane trafficking in the early secretory pathway. Inhibits BACE1 activity and amyloid precursor protein processing. May induce caspase-8 cascade and apoptosis. May favor BCL2 translocation to the mitochondria upon endoplasmic reticulum stress. Induces the formation of endoplasmic reticulum tubules. Also acts as an inflammation-resolving regulator by interacting with both TRIM25 and RIGI, subsequently impairing RIGI 'Lys-63'-linked polyubiquitination leading to IRF3 and NF-kappa-B inhibition. Its function is as follows. (Microbial infection) Plays a positive role in viral replication and pathogenesis of enteroviruses. The chain is Reticulon-3 (RTN3) from Homo sapiens (Human).